Here is a 925-residue protein sequence, read N- to C-terminus: NADH:fumarate oxidoreductase (925 aa).

T447 carries the FMN phosphoryl threonine modification. Residues A492, E511, N519, T520, A525, G526, and V633 each coordinate FAD. A525 contributes to the fumarate binding site. Succinate is bound at residue A525. Residues H719, S731, and E732 each coordinate succinate. Fumarate contacts are provided by S731 and E732. R756 serves as the catalytic Proton donor. Position 859 (H859) interacts with fumarate. Succinate is bound at residue H859. FAD contacts are provided by H860 and E889. Fumarate-binding residues include R899 and G902. Succinate-binding residues include R899 and G902. Positions 904 and 905 each coordinate FAD.

Belongs to the FAD-dependent oxidoreductase 2 family. FRD/SDH subfamily. In terms of assembly, monomer. It depends on FAD as a cofactor. The cofactor is FMN. Post-translationally, is flavinylated on Thr-447 by ApbE2, encoded in a neighboring gene. Flavinylation is essential for catalytic activity.

It is found in the cytoplasm. It carries out the reaction succinate + NAD(+) = fumarate + NADH + H(+). Catalyzes the anaerobic reduction of fumarate to succinate. Uses NADH as the inherent electron donor in this process. Is involved in anaerobic fumarate respiration in K.pneumoniae. This is NADH:fumarate oxidoreductase from Klebsiella pneumoniae (strain 342).